We begin with the raw amino-acid sequence, 296 residues long: Tyrosine recombinase XerC (296 aa).

The Core-binding (CB) domain maps to 1 to 84; it reads MNKIQESFLY…TLRSFYEFWM (84 aa). A Tyr recombinase domain is found at 105 to 286; it reads YLPHFFYEEE…SNQQLRKVYL (182 aa). Active-site residues include arginine 145, lysine 169, histidine 238, arginine 241, and histidine 264. Tyrosine 273 acts as the O-(3'-phospho-DNA)-tyrosine intermediate in catalysis.

It belongs to the 'phage' integrase family. XerC subfamily. As to quaternary structure, forms a cyclic heterotetrameric complex composed of two molecules of XerC and two molecules of XerD.

Its subcellular location is the cytoplasm. Functionally, site-specific tyrosine recombinase, which acts by catalyzing the cutting and rejoining of the recombining DNA molecules. The XerC-XerD complex is essential to convert dimers of the bacterial chromosome into monomers to permit their segregation at cell division. It also contributes to the segregational stability of plasmids. This is Tyrosine recombinase XerC from Staphylococcus carnosus (strain TM300).